Here is a 301-residue protein sequence, read N- to C-terminus: F-box protein At4g02733 (301 aa).

Positions 91 to 146 (NSISWFLPSELTVKVFSMVDTKSLMQASACCTMFNNCAMDPLCYFHIDLTKAFKHV) constitute an F-box domain.

The chain is F-box protein At4g02733 from Arabidopsis thaliana (Mouse-ear cress).